The sequence spans 435 residues: Ribulose bisphosphate carboxylase-like protein (435 aa).

Mg(2+)-binding residues include K198, D200, and E201. K198 is subject to N6-carboxylysine.

Belongs to the RuBisCO large chain family. Type IV subfamily. Homodimer. It depends on Mg(2+) as a cofactor.

Its function is as follows. May be involved in sulfur metabolism and oxidative stress response. Does not show RuBisCO activity. In Chlorobaculum tepidum (strain ATCC 49652 / DSM 12025 / NBRC 103806 / TLS) (Chlorobium tepidum), this protein is Ribulose bisphosphate carboxylase-like protein.